Consider the following 354-residue polypeptide: Guanine nucleotide-binding protein subunit alpha-14 (354 aa).

The G-alpha domain occupies 33-354 (RELKLLLLGT…QLNLREFNLV (322 aa)). The tract at residues 36–49 (KLLLLGTGESGKST) is G1 motif. GTP is bound by residues 41–48 (GTGESGKS), 175–181 (LRVRVPT), 200–204 (DVGGQ), 269–272 (NKKD), and Ala-326. Residues Ser-48 and Thr-181 each contribute to the Mg(2+) site. Residues 173 to 181 (DVLRVRVPT) form a G2 motif region. Positions 196–205 (FRMVDVGGQR) are G3 motif. Positions 265–272 (ILFLNKKD) are G4 motif. The segment at 324–329 (TCATDT) is G5 motif.

The protein belongs to the G-alpha family. G(q) subfamily. As to quaternary structure, g proteins are composed of 3 units; alpha, beta and gamma. The alpha chain contains the guanine nucleotide binding site.

In terms of biological role, guanine nucleotide-binding proteins (G proteins) are involved as modulators or transducers in various transmembrane signaling systems. Acts as an activator of phospholipase C. Mediates responses to trypsin. The sequence is that of Guanine nucleotide-binding protein subunit alpha-14 (gna14) from Xenopus laevis (African clawed frog).